Consider the following 181-residue polypeptide: Insulin-like growth factor 2 (181 aa).

The first 24 residues, 1–24, serve as a signal peptide directing secretion; it reads MGIPMRKPLLVLLVFLALASCCYA. Residues 25-52 form a b region; the sequence is AYRPSETLCGGELVDTLQFVCGDRGFYF. Cystine bridges form between C33–C71, C45–C84, and C70–C75. The tract at residues 53-64 is c; that stretch reads SRPASRVNRRSR. The tract at residues 65–85 is a; the sequence is GIVEECCFRSCDLALLETYCA. The segment at 86-91 is d; sequence TPAKSE. Residues 92 to 181 constitute a propeptide, e peptide; that stretch reads RDVSTPPTVL…ASPEASGHRK (90 aa). The interval 151–181 is disordered; that stretch reads EAKRHRPLTARPTRDPAAHGGASPEASGHRK. O-linked (GalNAc...) threonine glycosylation is present at T163.

The protein belongs to the insulin family. Interacts with MYORG; this interaction is required for IGF2 secretion. Interacts with integrins ITGAV:ITGB3 and ITGA6:ITGB4; integrin-binding is required for IGF2 signaling. Interacts with IGFBP2. In terms of processing, proteolytically processed by PCSK4, proIGF2 is cleaved at Arg-128 and Arg-92 to generate big-IGF2 and mature IGF2.

The protein resides in the secreted. Its function is as follows. The insulin-like growth factors possess growth-promoting activity. Major fetal growth hormone in mammals. Plays a key role in regulating fetoplacental development. IGF2 is influenced by placental lactogen. Also involved in tissue differentiation. In adults, involved in glucose metabolism in adipose tissue, skeletal muscle and liver. Acts as a ligand for integrin which is required for IGF2 signaling. Positively regulates myogenic transcription factor MYOD1 function by facilitating the recruitment of transcriptional coactivators, thereby controlling muscle terminal differentiation. Inhibits myoblast differentiation and modulates metabolism via increasing the mitochondrial respiration rate. In terms of biological role, preptin undergoes glucose-mediated co-secretion with insulin, and acts as a physiological amplifier of glucose-mediated insulin secretion. Exhibits osteogenic properties by increasing osteoblast mitogenic activity through phosphoactivation of MAPK1 and MAPK3. This Sus scrofa (Pig) protein is Insulin-like growth factor 2.